Reading from the N-terminus, the 447-residue chain is Protein cortex (447 aa).

WD repeat units lie at residues threonine 108–glycine 148, phenylalanine 149–serine 188, asparagine 198–arginine 237, aspartate 281–threonine 325, glycine 344–glycine 380, and serine 384–lysine 423. The short motif at serine 384–serine 395 is the D-box element.

It belongs to the WD repeat CORT family.

Its subcellular location is the cytoplasm. In terms of biological role, controls wing pigmentation patterning by regulating scale cell development, thereby playing a key role in mimicry and crypsis. Probably acts as an activator of the anaphase promoting complex/cyclosome (APC/C) that promotes the ubiquitin ligase activity and substrate specificity of the APC/C. This Heliconius melpomene (Postman butterfly) protein is Protein cortex.